The chain runs to 101 residues: Large ribosomal subunit protein bL28 (101 aa).

The protein belongs to the bacterial ribosomal protein bL28 family.

This chain is Large ribosomal subunit protein bL28, found in Rhodopseudomonas palustris (strain ATCC BAA-98 / CGA009).